The sequence spans 216 residues: Hexitol phosphatase A (216 aa).

Asp-9 (nucleophile) is an active-site residue. Residues Asp-9 and Asp-11 each coordinate a divalent metal cation. Residues 9–11 (DLD), 106–107 (TS), and Lys-138 contribute to the substrate site. Asp-11 serves as the catalytic Proton donor. Asp-163 contacts a divalent metal cation.

This sequence belongs to the HAD-like hydrolase superfamily. CbbY/CbbZ/Gph/YieH family. The cofactor is Mg(2+). Requires Mn(2+) as cofactor. Co(2+) is required as a cofactor.

The enzyme catalyses sugar phosphate + H2O = sugar + phosphate.. The catalysed reaction is D-mannitol 1-phosphate + H2O = D-mannitol + phosphate. It catalyses the reaction D-sorbitol 6-phosphate + H2O = D-sorbitol + phosphate. Its function is as follows. Sugar-phosphate phosphohydrolase that appears to contribute to butanol tolerance. Catalyzes the dephosphorylation of D-mannitol 1-phosphate and D-sorbitol 6-phosphate. Is also able to dephosphorylate other sugar phosphates in vitro including ribose-5-phosphate (Rib5P), 2-deoxyribose-5-phosphate, fructose-1-phosphate (Fru1P), fructose-6-phosphate (Fru6P), and glucose-6-phosphate (Glu6P). Selectively hydrolyzes beta-D-glucose-1-phosphate (bGlu1P) and has no activity with the alpha form. The protein is Hexitol phosphatase A of Escherichia coli (strain K12).